A 773-amino-acid chain; its full sequence is Leucine-rich repeat and calponin homology domain-containing protein 2 (773 aa).

The segment at 1 to 46 (MAASQGGGGNSGGGGCSGGGSGGGGGAAGGGGGGGGGGGGGAGAGG) is disordered. 9 LRR repeats span residues 97–118 (NSGI…GYDL), 120–141 (DTTQ…VWLF), 143–164 (PLET…IKNL), 166–187 (MLTY…LFDL), 188–209 (PLKV…IGKL), 211–232 (DLME…MGKL), 234–256 (SLKE…GDLP), 257–277 (LVKL…YRKL), and 279–300 (HLQV…ICLK). 3 disordered regions span residues 324–409 (LDLP…QKDQ), 438–478 (FLKG…LKEV), and 573–633 (KYKS…SRQE). 2 stretches are compositionally biased toward basic and acidic residues: residues 386 to 396 (SNREQTSRNDS) and 440 to 466 (KGKE…KEQL). Polar residues predominate over residues 594-603 (AHMSAQSPVS). Positions 650-763 (LREEREQIRQ…VTVQALLELP (114 aa)) constitute a Calponin-homology (CH) domain.

Its function is as follows. May play a role in the organization of the cytoskeleton. The polypeptide is Leucine-rich repeat and calponin homology domain-containing protein 2 (Lrch2) (Mus musculus (Mouse)).